The chain runs to 299 residues: ATP phosphoribosyltransferase (299 aa).

It belongs to the ATP phosphoribosyltransferase family. Long subfamily. In terms of assembly, equilibrium between an active dimeric form, an inactive hexameric form and higher aggregates. Interconversion between the various forms is largely reversible and is influenced by the natural substrates and inhibitors of the enzyme. The cofactor is Mg(2+).

Its subcellular location is the cytoplasm. It catalyses the reaction 1-(5-phospho-beta-D-ribosyl)-ATP + diphosphate = 5-phospho-alpha-D-ribose 1-diphosphate + ATP. Its pathway is amino-acid biosynthesis; L-histidine biosynthesis; L-histidine from 5-phospho-alpha-D-ribose 1-diphosphate: step 1/9. Feedback inhibited by histidine. Its function is as follows. Catalyzes the condensation of ATP and 5-phosphoribose 1-diphosphate to form N'-(5'-phosphoribosyl)-ATP (PR-ATP). Has a crucial role in the pathway because the rate of histidine biosynthesis seems to be controlled primarily by regulation of HisG enzymatic activity. The polypeptide is ATP phosphoribosyltransferase (Buchnera aphidicola subsp. Diuraphis noxia).